The chain runs to 158 residues: Snaclec alboaggregin-D subunit alpha (158 aa).

Residues 1–23 (MGRFIFGSFGLLVVFLSLSGTGA) form the signal peptide. Cystine bridges form between Cys-27/Cys-38, Cys-55/Cys-152, and Cys-127/Cys-144. The C-type lectin domain occupies 34–153 (YDRYCYQAFS…CAELNPFICK (120 aa)).

Belongs to the snaclec family. As to quaternary structure, tetramer of heterodimers of alpha and beta subunits (alphabeta)(4); disulfide-linked. As to expression, expressed by the venom gland.

It localises to the secreted. Functionally, snaclec that induces human platelet aggregation in the absence of any cofactor with the EC(50) of 0.25 nM and causes tyrosine phosphorylation in human platelets. Antibodies against either platelet GPIbalpha (GP1BA) or GPVI (GP6) inhibit alboaggregin D-induced platelet aggregation. Only the combination of these two antibodies completely inhibit aggregation, suggesting that it acts through both GPIbalpha (GP1BA) and GPVI (GP6). The protein is Snaclec alboaggregin-D subunit alpha of Trimeresurus albolabris (White-lipped pit viper).